Here is a 155-residue protein sequence, read N- to C-terminus: Small ribosomal subunit protein uS7 (155 aa).

The protein belongs to the universal ribosomal protein uS7 family. In terms of assembly, part of the 30S ribosomal subunit. Contacts proteins S9 and S11.

Functionally, one of the primary rRNA binding proteins, it binds directly to 16S rRNA where it nucleates assembly of the head domain of the 30S subunit. Is located at the subunit interface close to the decoding center, probably blocks exit of the E-site tRNA. The chain is Small ribosomal subunit protein uS7 from Thermosipho melanesiensis (strain DSM 12029 / CIP 104789 / BI429).